A 181-amino-acid chain; its full sequence is Probable mitochondrial import inner membrane translocase subunit tim-17B.1 (181 aa).

A run of 3 helical transmembrane segments spans residues 17–37 (IGSAFAMGLVGGSIFQAFGGY), 61–81 (GVQFAAWGGMFSTIDCCLVAI), and 109–129 (VMAGSAILGSVILAMIEGVGL). Residues 137 to 181 (AMMDPTQPPPEALDDPRSLGQKSQAEPGLDQTRPFGIPTGLPNLS) form a disordered region.

The protein belongs to the Tim17/Tim22/Tim23 family.

The protein resides in the mitochondrion inner membrane. Its function is as follows. Essential component of the TIM23 complex, a complex that mediates the translocation of transit peptide-containing proteins across the mitochondrial inner membrane. The sequence is that of Probable mitochondrial import inner membrane translocase subunit tim-17B.1 from Caenorhabditis elegans.